We begin with the raw amino-acid sequence, 530 residues long: Arginine-containing cyclodipeptide synthase pthA (530 aa).

Residues 419–423 (DDRAE) carry the Conserved DDXXE motif motif.

This sequence belongs to the arginine-containing cyclodipeptide synthase family.

It catalyses the reaction L-aspartyl-tRNA(Asp) + L-arginyl-tRNA(Arg) = cyclo(L-arginyl-L-aspartyl) + tRNA(Asp) + tRNA(Arg) + 2 H(+). Its pathway is secondary metabolite biosynthesis. Its function is as follows. Arginine-containing cyclodipeptide synthase; part of the cluster that mediates the biosynthesis of a highly modified cyclo-arginine-aspartate dipeptide (cRD). Within the pathway, pthA acts as the scaffold-generating enzyme and is responsible for formation of the cyclo-Arg-Asp diketopiperazine (cRW) from L-arginyl-tRNA(Arg) + L-aspartyl-tRNA(Asp). Additional enzymes from the cluster then further modify the cyclo-Arg-Asp diketopiperazine (cRW) scaffold. This Penicillium thymicola protein is Arginine-containing cyclodipeptide synthase pthA.